We begin with the raw amino-acid sequence, 244 residues long: Ribonuclease P protein component 3 (244 aa).

The protein belongs to the eukaryotic/archaeal RNase P protein component 3 family. As to quaternary structure, consists of a catalytic RNA component and at least 4-5 protein subunits.

It is found in the cytoplasm. The catalysed reaction is Endonucleolytic cleavage of RNA, removing 5'-extranucleotides from tRNA precursor.. Part of ribonuclease P, a protein complex that generates mature tRNA molecules by cleaving their 5'-ends. This chain is Ribonuclease P protein component 3, found in Methanopyrus kandleri (strain AV19 / DSM 6324 / JCM 9639 / NBRC 100938).